We begin with the raw amino-acid sequence, 160 residues long: Major allergen Pru ar 1 (160 aa).

The protein belongs to the BetVI family.

This chain is Major allergen Pru ar 1, found in Prunus armeniaca (Apricot).